Reading from the N-terminus, the 211-residue chain is 7-carboxy-7-deazaguanine synthase (211 aa).

Substrate is bound by residues Leu22–Gly24 and Arg37. The Radical SAM core domain maps to Asn28–Glu211. [4Fe-4S] cluster is bound by residues Cys41, Cys45, and Cys48. Thr50 serves as a coordination point for Mg(2+). A substrate-binding site is contributed by Thr78. S-adenosyl-L-methionine-binding positions include Gly80 and Ser122–Lys124.

The protein belongs to the radical SAM superfamily. 7-carboxy-7-deazaguanine synthase family. In terms of assembly, homodimer. Requires [4Fe-4S] cluster as cofactor. S-adenosyl-L-methionine is required as a cofactor. It depends on Mg(2+) as a cofactor.

The catalysed reaction is 6-carboxy-5,6,7,8-tetrahydropterin + H(+) = 7-carboxy-7-deazaguanine + NH4(+). It functions in the pathway purine metabolism; 7-cyano-7-deazaguanine biosynthesis. Its function is as follows. Catalyzes the complex heterocyclic radical-mediated conversion of 6-carboxy-5,6,7,8-tetrahydropterin (CPH4) to 7-carboxy-7-deazaguanine (CDG), a step common to the biosynthetic pathways of all 7-deazapurine-containing compounds. This Haemophilus influenzae (strain ATCC 51907 / DSM 11121 / KW20 / Rd) protein is 7-carboxy-7-deazaguanine synthase.